The primary structure comprises 992 residues: ATP-dependent 6-phosphofructokinase subunit alpha (992 aa).

The N-terminal catalytic PFK domain 1 stretch occupies residues 1 to 558 (MNNSVYGVAF…LYSNFMSTTV (558 aa)). ATP is bound by residues glycine 193, 256–257 (RS), and 286–289 (GDGS). Mg(2+) is bound at residue aspartate 287. Residues 332–334 (SID), arginine 369, 376–378 (MGR), glutamate 433, lysine 460, and 466–469 (HVQR) contribute to the beta-D-fructose 6-phosphate site. The Proton acceptor role is filled by aspartate 334. The interval 559–572 (NDDGSQLLPEADRL) is interdomain linker. The interval 573–992 (NIAIVHVGAP…AAKEDSALYV (420 aa)) is C-terminal regulatory PFK domain 2. Residues arginine 643, 700 to 704 (TVSNN), arginine 738, 745 to 747 (QGG), glutamate 805, arginine 831, 837 to 840 (HVQQ), and arginine 929 contribute to the beta-D-fructose 2,6-bisphosphate site.

Belongs to the phosphofructokinase type A (PFKA) family. ATP-dependent PFK group I subfamily. Eukaryotic two domain clade 'E' sub-subfamily. As to quaternary structure, heterooctamer of 4 alpha and 4 beta chains. It depends on Mg(2+) as a cofactor.

It localises to the cytoplasm. The enzyme catalyses beta-D-fructose 6-phosphate + ATP = beta-D-fructose 1,6-bisphosphate + ADP + H(+). Its pathway is carbohydrate degradation; glycolysis; D-glyceraldehyde 3-phosphate and glycerone phosphate from D-glucose: step 3/4. Allosterically activated by ADP, AMP, or fructose 2,6-bisphosphate, and allosterically inhibited by ATP or citrate. In terms of biological role, catalyzes the phosphorylation of D-fructose 6-phosphate to fructose 1,6-bisphosphate by ATP, the first committing step of glycolysis. This chain is ATP-dependent 6-phosphofructokinase subunit alpha (PFK1), found in Kluyveromyces lactis (strain ATCC 8585 / CBS 2359 / DSM 70799 / NBRC 1267 / NRRL Y-1140 / WM37) (Yeast).